A 445-amino-acid chain; its full sequence is Transcriptional enhancer factor TEF-4 (445 aa).

2 disordered regions span residues 1–47 (MGDP…VWSP) and 191–217 (PPAS…SPPA). Over residues 25-37 (EGTGGSEGVGGDG) the composition is skewed to gly residues. Residues 38 to 114 (SPDAEGVWSP…QVLARRKSRE (77 aa)) constitute a DNA-binding region (TEA). The tract at residues 172-445 (WNVPDVKPFS…QYHIYRLVRD (274 aa)) is transcriptional activation. Residues 199–216 (YEPPPALSPLPPPAPSPP) show a composition bias toward pro residues.

Interacts with YAP1 and WWTR1/TAZ. Highest expression in brain. High levels also found in lung, testis and ovarian follicle cells. Lower levels in heart and spleen.

It localises to the nucleus. Functionally, transcription factor which plays a key role in the Hippo signaling pathway, a pathway involved in organ size control and tumor suppression by restricting proliferation and promoting apoptosis. The core of this pathway is composed of a kinase cascade wherein MST1/MST2, in complex with its regulatory protein SAV1, phosphorylates and activates LATS1/2 in complex with its regulatory protein MOB1, which in turn phosphorylates and inactivates YAP1 oncoprotein and WWTR1/TAZ. Acts by mediating gene expression of YAP1 and WWTR1/TAZ, thereby regulating cell proliferation, migration and epithelial mesenchymal transition (EMT) induction. Binds to the SPH and GT-IIC 'enhansons' (5'-GTGGAATGT-3'). May be involved in the gene regulation of neural development. Binds to the M-CAT motif. The sequence is that of Transcriptional enhancer factor TEF-4 (Tead2) from Mus musculus (Mouse).